A 132-amino-acid polypeptide reads, in one-letter code: Small ribosomal subunit protein eS12 (132 aa).

It belongs to the eukaryotic ribosomal protein eS12 family.

In Oreochromis niloticus (Nile tilapia), this protein is Small ribosomal subunit protein eS12 (rps12).